The sequence spans 36 residues: Pancreatic polypeptide (36 aa).

Residue phenylalanine 36 is modified to Phenylalanine amide.

It belongs to the NPY family.

Its subcellular location is the secreted. Hormone secreted by pancreatic cells that acts as a regulator of pancreatic and gastrointestinal functions. The sequence is that of Pancreatic polypeptide (ppy) from Aquarana catesbeiana (American bullfrog).